The chain runs to 930 residues: Protein translocase subunit SecA (930 aa).

ATP contacts are provided by residues glutamine 87, 105-109 (GEGKT), and aspartate 515. Residues cysteine 914, cysteine 916, cysteine 925, and histidine 926 each coordinate Zn(2+).

Belongs to the SecA family. Monomer and homodimer. Part of the essential Sec protein translocation apparatus which comprises SecA, SecYEG and auxiliary proteins SecDF-YajC and YidC. The cofactor is Zn(2+).

The protein resides in the cell inner membrane. The protein localises to the cytoplasm. The enzyme catalyses ATP + H2O + cellular proteinSide 1 = ADP + phosphate + cellular proteinSide 2.. Part of the Sec protein translocase complex. Interacts with the SecYEG preprotein conducting channel. Has a central role in coupling the hydrolysis of ATP to the transfer of proteins into and across the cell membrane, serving both as a receptor for the preprotein-SecB complex and as an ATP-driven molecular motor driving the stepwise translocation of polypeptide chains across the membrane. The sequence is that of Protein translocase subunit SecA from Burkholderia vietnamiensis (strain G4 / LMG 22486) (Burkholderia cepacia (strain R1808)).